The chain runs to 831 residues: Phenylalanine--tRNA ligase beta subunit (831 aa).

The region spanning 42–157 is the tRNA-binding domain; it reads ADISGPIVVG…GFAEPGTKAD (116 aa). The region spanning 408–483 is the B5 domain; the sequence is VPREPIVVRA…RNEGYENIPA (76 aa). Residues D461, D467, E470, and E471 each contribute to the Mg(2+) site. The region spanning 737 to 830 is the FDX-ACB domain; the sequence is STYPVATQDV…AAERTGAVLR (94 aa).

This sequence belongs to the phenylalanyl-tRNA synthetase beta subunit family. Type 1 subfamily. Tetramer of two alpha and two beta subunits. Requires Mg(2+) as cofactor.

The protein resides in the cytoplasm. It catalyses the reaction tRNA(Phe) + L-phenylalanine + ATP = L-phenylalanyl-tRNA(Phe) + AMP + diphosphate + H(+). The chain is Phenylalanine--tRNA ligase beta subunit from Thermobifida fusca (strain YX).